The primary structure comprises 155 residues: Small ribosomal subunit protein uS7cz/uS7cy (155 aa).

It belongs to the universal ribosomal protein uS7 family. As to quaternary structure, part of the 30S ribosomal subunit.

Its subcellular location is the plastid. The protein resides in the chloroplast. In terms of biological role, one of the primary rRNA binding proteins, it binds directly to 16S rRNA where it nucleates assembly of the head domain of the 30S subunit. The chain is Small ribosomal subunit protein uS7cz/uS7cy (rps7-A) from Lotus japonicus (Lotus corniculatus var. japonicus).